A 1065-amino-acid chain; its full sequence is DNA polymerase III subunit alpha (1065 aa).

It belongs to the DNA polymerase type-C family. DnaE subfamily. As to quaternary structure, DNA polymerase III contains a core (composed of alpha, epsilon and theta chains) that associates with a tau subunit. This core dimerizes to form the PolIII' complex. PolIII' associates with the gamma complex (composed of gamma, delta, delta', psi and chi chains) and with the beta chain to form the complete DNA polymerase III complex.

It is found in the cytoplasm. The enzyme catalyses DNA(n) + a 2'-deoxyribonucleoside 5'-triphosphate = DNA(n+1) + diphosphate. Functionally, DNA polymerase III is a complex, multichain enzyme responsible for most of the replicative synthesis in bacteria. This DNA polymerase also exhibits 3' to 5' exonuclease activity. The alpha chain is the DNA polymerase. This chain is DNA polymerase III subunit alpha (dnaE), found in Staphylococcus aureus (strain Mu50 / ATCC 700699).